Reading from the N-terminus, the 442-residue chain is UDP-N-acetylmuramate--L-alanine ligase (442 aa).

109–115 (GAHGKTS) serves as a coordination point for ATP.

Belongs to the MurCDEF family.

The protein resides in the cytoplasm. The enzyme catalyses UDP-N-acetyl-alpha-D-muramate + L-alanine + ATP = UDP-N-acetyl-alpha-D-muramoyl-L-alanine + ADP + phosphate + H(+). It functions in the pathway cell wall biogenesis; peptidoglycan biosynthesis. Functionally, cell wall formation. The sequence is that of UDP-N-acetylmuramate--L-alanine ligase from Streptococcus pyogenes serotype M18 (strain MGAS8232).